Reading from the N-terminus, the 308-residue chain is Protein FdhE homolog (308 aa).

The protein belongs to the FdhE family.

The protein localises to the cytoplasm. Necessary for formate dehydrogenase activity. This Edwardsiella ictaluri (strain 93-146) protein is Protein FdhE homolog.